The primary structure comprises 365 residues: Peptide chain release factor 1 (365 aa).

At glutamine 242 the chain carries N5-methylglutamine.

It belongs to the prokaryotic/mitochondrial release factor family. Methylated by PrmC. Methylation increases the termination efficiency of RF1.

The protein localises to the cytoplasm. Functionally, peptide chain release factor 1 directs the termination of translation in response to the peptide chain termination codons UAG and UAA. This is Peptide chain release factor 1 from Fusobacterium nucleatum subsp. nucleatum (strain ATCC 25586 / DSM 15643 / BCRC 10681 / CIP 101130 / JCM 8532 / KCTC 2640 / LMG 13131 / VPI 4355).